The sequence spans 91 residues: Putative transmembrane protein ORF91a (91 aa).

Transmembrane regions (helical) follow at residues 17–37 (TGISFDSITGAIIAGVVVGLA), 40–60 (AFLGKFPDYVEVLIGVGLLFM), and 69–89 (GIGFVLTADGIYGLIKNYIST).

It localises to the host membrane. The chain is Putative transmembrane protein ORF91a from Acidianus convivator (ABV).